Here is a 496-residue protein sequence, read N- to C-terminus: Acyltransferase clz6 (496 aa).

His-163 serves as the catalytic Proton acceptor.

Belongs to the plant acyltransferase family. As to quaternary structure, monomer.

The protein operates within secondary metabolite biosynthesis. Functionally, acyltransferase; part of the gene cluster that mediates the biosynthesis of squalestatin S1 (SQS1, also known as zaragozic acid A), a heavily oxidized fungal polyketide that offers potent cholesterol lowering activity by targeting squalene synthase (SS). SQS1 is composed of a 2,8-dioxobicyclic[3.2.1]octane-3,4,5-tricarboxyclic acid core that is connected to two lipophilic polyketide arms. These initial steps feature the priming of an unusual benzoic acid starter unit onto the highly reducing polyketide synthase clz14, followed by oxaloacetate extension and product release to generate a tricarboxylic acid containing product. The phenylalanine ammonia lyase (PAL) clz10 and the acyl-CoA ligase clz12 are involved in transforming phenylalanine into benzoyl-CoA. The citrate synthase-like protein clz17 is involved in connecting the C-alpha-carbons of the hexaketide chain and oxaloacetate to afford the tricarboxylic acid unit. The potential hydrolytic enzymes, clz11 and clz13, are in close proximity to pks2 and may participate in product release. On the other side, the tetraketide arm is synthesized by a the squalestatin tetraketide synthase clz2 and enzymatically esterified to the core in the last biosynthetic step, by the acetyltransferase clz6. The biosynthesis of the tetraketide must involve 3 rounds of chain extension. After the first and second rounds methyl-transfer occurs, and in all rounds of extension the ketoreductase and dehydratase are active. The enoyl reductase and C-MeT of clz2 are not active in the final round of extension. The acetyltransferase clz6 appears to have a broad substrate selectivity for its acyl CoA substrate, allowing the in vitro synthesis of novel squalestatins. The biosynthesis of SQS1 requires several oxidative steps likely performed by oxidoreductases clz3, clz15 and clz16. Finally, in support of the identification of the cluster as being responsible for SQS1 production, the cluster contains a gene encoding a putative squalene synthase (SS) clz20, suggesting a likely mechanism for self-resistance. The chain is Acyltransferase clz6 from Cochliobolus lunatus (Filamentous fungus).